The chain runs to 261 residues: Taurine import ATP-binding protein TauB (261 aa).

One can recognise an ABC transporter domain in the interval 4–233; that stretch reads LQLEGIGAHY…RYSAGESARA (230 aa). 38-45 contacts ATP; that stretch reads GPSGSGKT.

It belongs to the ABC transporter superfamily. Taurine importer (TC 3.A.1.17.1) family. The complex is composed of two ATP-binding proteins (TauB), two transmembrane proteins (TauC) and a solute-binding protein (TauA).

Its subcellular location is the cell inner membrane. The enzyme catalyses taurine(out) + ATP + H2O = taurine(in) + ADP + phosphate + H(+). Part of the ABC transporter complex TauABC involved in taurine import. Responsible for energy coupling to the transport system. This chain is Taurine import ATP-binding protein TauB, found in Pseudomonas syringae pv. tomato (strain ATCC BAA-871 / DC3000).